Here is a 696-residue protein sequence, read N- to C-terminus: Polyribonucleotide nucleotidyltransferase (696 aa).

The Mg(2+) site is built by Asp-486 and Asp-492. In terms of domain architecture, KH spans 553–612 (PRITQKQIPKDRIGELIGPGGKMIRAIIEQSGSEISVDDSGKVTIASPSEESKEKAIAMI). The S1 motif domain occupies 622-690 (GKIYDGVIKR…KMGKIDLSRK (69 aa)).

This sequence belongs to the polyribonucleotide nucleotidyltransferase family. Mg(2+) serves as cofactor.

The protein localises to the cytoplasm. It catalyses the reaction RNA(n+1) + phosphate = RNA(n) + a ribonucleoside 5'-diphosphate. Involved in mRNA degradation. Catalyzes the phosphorolysis of single-stranded polyribonucleotides processively in the 3'- to 5'-direction. This Leptospira biflexa serovar Patoc (strain Patoc 1 / ATCC 23582 / Paris) protein is Polyribonucleotide nucleotidyltransferase.